The primary structure comprises 146 residues: Cyanate hydratase (146 aa).

Catalysis depends on residues arginine 87, glutamate 90, and serine 113.

It belongs to the cyanase family.

It carries out the reaction cyanate + hydrogencarbonate + 3 H(+) = NH4(+) + 2 CO2. Its function is as follows. Catalyzes the reaction of cyanate with bicarbonate to produce ammonia and carbon dioxide. This chain is Cyanate hydratase, found in Marinomonas sp. (strain MWYL1).